Here is a 93-residue protein sequence, read N- to C-terminus: uncharacterized protein (93 aa).

The chain crosses the membrane as a helical span at residues valine 12–leucine 32. Residues threonine 47 to serine 66 are disordered.

The protein localises to the cell membrane. This is an uncharacterized protein from Mycoplasma genitalium (strain ATCC 33530 / DSM 19775 / NCTC 10195 / G37) (Mycoplasmoides genitalium).